Here is a 170-residue protein sequence, read N- to C-terminus: Alpha-crystallin A chain (170 aa).

Met1 bears the N-acetylmethionine mark. Residues 1–63 (MDVTIQHPWF…RTVLDSGISE (63 aa)) form a required for complex formation with BFSP1 and BFSP2 region. The residue at position 6 (Gln6) is a Deamidated glutamine; partial. Residue Ser45 is modified to Phosphoserine. Deamidated glutamine; partial is present on Gln50. Positions 52 to 161 (LFRTVLDSGI…SERTIPVSRE (110 aa)) constitute a sHSP domain. 2 positions are modified to N6-acetyllysine: Lys70 and Lys99. Residue His100 participates in Zn(2+) binding. Position 101 is a deamidated asparagine; partial (Asn101). Positions 102, 107, and 151 each coordinate Zn(2+). The tract at residues 144 to 170 (PKIVDPSHSERTIPVSREEKPSSAPSS) is disordered. The segment covering 148-164 (DPSHSERTIPVSREEKP) has biased composition (basic and acidic residues). Ser159 carries O-linked (GlcNAc) serine glycosylation.

It belongs to the small heat shock protein (HSP20) family. As to quaternary structure, heteromer composed of three CRYAA and one CRYAB subunits. Inter-subunit bridging via zinc ions enhances stability, which is crucial as there is no protein turn over in the lens. Can also form homodimers and homotetramers (dimers of dimers) which serve as the building blocks of homooligomers. Within homooligomers, the zinc-binding motif is created from residues of 3 different molecules. His-100 and Glu-102 from one molecule are ligands of the zinc ion, and His-107 and His-151 residues from additional molecules complete the site with tetrahedral coordination geometry. Part of a complex required for lens intermediate filament formation composed of BFSP1, BFSP2 and CRYAA. In terms of processing, acetylation at Lys-70 may increase chaperone activity. Post-translationally, undergoes age-dependent proteolytical cleavage at the C-terminus.

The protein localises to the cytoplasm. It is found in the nucleus. Functionally, contributes to the transparency and refractive index of the lens. Acts as a chaperone, preventing aggregation of various proteins under a wide range of stress conditions. Required for the correct formation of lens intermediate filaments as part of a complex composed of BFSP1, BFSP2 and CRYAA. In Choloepus hoffmanni (Hoffmann's two-fingered sloth), this protein is Alpha-crystallin A chain (CRYAA).